A 361-amino-acid chain; its full sequence is Chorismate synthase (361 aa).

NADP(+)-binding residues include arginine 48 and arginine 54. FMN is bound by residues 125-127, 238-239, glycine 278, 293-297, and arginine 319; these read RSS, NA, and KPTSS.

It belongs to the chorismate synthase family. Homotetramer. FMNH2 is required as a cofactor.

The enzyme catalyses 5-O-(1-carboxyvinyl)-3-phosphoshikimate = chorismate + phosphate. Its pathway is metabolic intermediate biosynthesis; chorismate biosynthesis; chorismate from D-erythrose 4-phosphate and phosphoenolpyruvate: step 7/7. Functionally, catalyzes the anti-1,4-elimination of the C-3 phosphate and the C-6 proR hydrogen from 5-enolpyruvylshikimate-3-phosphate (EPSP) to yield chorismate, which is the branch point compound that serves as the starting substrate for the three terminal pathways of aromatic amino acid biosynthesis. This reaction introduces a second double bond into the aromatic ring system. In Yersinia pseudotuberculosis serotype O:1b (strain IP 31758), this protein is Chorismate synthase.